Reading from the N-terminus, the 151-residue chain is Transcriptional regulator MraZ (151 aa).

SpoVT-AbrB domains follow at residues 5–52 (ANAI…PLSE) and 81–124 (AVDL…DEDA).

This sequence belongs to the MraZ family. As to quaternary structure, forms oligomers.

It is found in the cytoplasm. It localises to the nucleoid. In Pseudomonas syringae pv. tomato (strain ATCC BAA-871 / DC3000), this protein is Transcriptional regulator MraZ.